We begin with the raw amino-acid sequence, 343 residues long: tRNA-specific 2-thiouridylase MnmA 2 (343 aa).

ATP is bound by residues 7–14 (GMSGGVDS) and Leu-33. Residue Cys-91 is the Nucleophile of the active site. Cysteines 91 and 189 form a disulfide. Residue Gly-115 coordinates ATP. The segment at 139–141 (KDQ) is interaction with tRNA. Cys-189 functions as the Cysteine persulfide intermediate in the catalytic mechanism.

The protein belongs to the MnmA/TRMU family.

The protein resides in the cytoplasm. It catalyses the reaction S-sulfanyl-L-cysteinyl-[protein] + uridine(34) in tRNA + AH2 + ATP = 2-thiouridine(34) in tRNA + L-cysteinyl-[protein] + A + AMP + diphosphate + H(+). Catalyzes the 2-thiolation of uridine at the wobble position (U34) of tRNA, leading to the formation of s(2)U34. The protein is tRNA-specific 2-thiouridylase MnmA 2 of Fusobacterium nucleatum subsp. nucleatum (strain ATCC 25586 / DSM 15643 / BCRC 10681 / CIP 101130 / JCM 8532 / KCTC 2640 / LMG 13131 / VPI 4355).